Consider the following 140-residue polypeptide: Nucleoside diphosphate kinase (140 aa).

Residues Lys-11, Phe-59, Arg-87, Thr-93, Arg-104, and Asn-114 each coordinate ATP. His-117 serves as the catalytic Pros-phosphohistidine intermediate.

The protein belongs to the NDK family. Homotetramer. Requires Mg(2+) as cofactor.

The protein localises to the cytoplasm. It catalyses the reaction a 2'-deoxyribonucleoside 5'-diphosphate + ATP = a 2'-deoxyribonucleoside 5'-triphosphate + ADP. It carries out the reaction a ribonucleoside 5'-diphosphate + ATP = a ribonucleoside 5'-triphosphate + ADP. Functionally, major role in the synthesis of nucleoside triphosphates other than ATP. The ATP gamma phosphate is transferred to the NDP beta phosphate via a ping-pong mechanism, using a phosphorylated active-site intermediate. This Chelativorans sp. (strain BNC1) protein is Nucleoside diphosphate kinase.